Reading from the N-terminus, the 82-residue chain is Small ribosomal subunit protein bS16 (82 aa).

Belongs to the bacterial ribosomal protein bS16 family.

In Elusimicrobium minutum (strain Pei191), this protein is Small ribosomal subunit protein bS16.